We begin with the raw amino-acid sequence, 104 residues long: Guanidinium exporter (104 aa).

Met1 is a topological domain (cytoplasmic). A helical membrane pass occupies residues 2-19; it reads AWIILVIAGLLEVIWAIG. Residues 20 to 28 lie on the Periplasmic side of the membrane; the sequence is LKYSHGFSR. Residues 29–48 traverse the membrane as a helical segment; that stretch reads LTPSIITLVAMAASVFLLAY. The Cytoplasmic segment spans residues 49–54; sequence AMKSLP. The helical transmembrane segment at 55–77 threads the bilayer; it reads AGTAYAVWTGIGAVGTAILGIVL. Residues 78–81 are Periplasmic-facing; the sequence is LGES. A helical transmembrane segment spans residues 82-100; the sequence is ASLARILSLGLILAGIIGL. At 101–104 the chain is on the cytoplasmic side; that stretch reads KLAS.

This sequence belongs to the drug/metabolite transporter (DMT) superfamily. Small multidrug resistance (SMR) (TC 2.A.7.1) family. Gdx/SugE subfamily.

It localises to the cell inner membrane. In terms of biological role, guanidinium ion exporter. Couples guanidinium export to the proton motive force, exchanging one guanidinium ion for two protons. The sequence is that of Guanidinium exporter from Yersinia pestis.